The primary structure comprises 416 residues: Multifunctional CCA protein (416 aa).

ATP-binding residues include glycine 8 and arginine 11. CTP-binding residues include glycine 8 and arginine 11. 2 residues coordinate Mg(2+): aspartate 21 and aspartate 23. Residues arginine 91, arginine 137, and arginine 140 each coordinate ATP. Positions 91, 137, and 140 each coordinate CTP. Residues 226-327 (TGVHIMLVID…VNLLERCDAF (102 aa)) enclose the HD domain.

The protein belongs to the tRNA nucleotidyltransferase/poly(A) polymerase family. Bacterial CCA-adding enzyme type 1 subfamily. Monomer. Can also form homodimers and oligomers. It depends on Mg(2+) as a cofactor. Ni(2+) serves as cofactor.

It catalyses the reaction a tRNA precursor + 2 CTP + ATP = a tRNA with a 3' CCA end + 3 diphosphate. The enzyme catalyses a tRNA with a 3' CCA end + 2 CTP + ATP = a tRNA with a 3' CCACCA end + 3 diphosphate. In terms of biological role, catalyzes the addition and repair of the essential 3'-terminal CCA sequence in tRNAs without using a nucleic acid template. Adds these three nucleotides in the order of C, C, and A to the tRNA nucleotide-73, using CTP and ATP as substrates and producing inorganic pyrophosphate. tRNA 3'-terminal CCA addition is required both for tRNA processing and repair. Also involved in tRNA surveillance by mediating tandem CCA addition to generate a CCACCA at the 3' terminus of unstable tRNAs. While stable tRNAs receive only 3'-terminal CCA, unstable tRNAs are marked with CCACCA and rapidly degraded. The protein is Multifunctional CCA protein of Janthinobacterium sp. (strain Marseille) (Minibacterium massiliensis).